The sequence spans 437 residues: Exosome complex component RRP45 (437 aa).

Serine 65 is modified (phosphoserine). An N6-acetyllysine; alternate modification is found at lysine 297. A Glycyl lysine isopeptide (Lys-Gly) (interchain with G-Cter in SUMO1); alternate cross-link involves residue lysine 297. Lysine 297 is covalently cross-linked (Glycyl lysine isopeptide (Lys-Gly) (interchain with G-Cter in SUMO2); alternate). 2 positions are modified to phosphoserine: serine 306 and serine 346. A disordered region spans residues 339–437 (IGEGIENSWG…KRRKKKRTAN (99 aa)). Over residues 349–363 (DLEDSEKEEEEEGGI) the composition is skewed to acidic residues. Residues serine 392, serine 394, and serine 407 each carry the phosphoserine modification. Residues 413 to 425 (AQTSANQKAPSKS) show a composition bias toward polar residues. A compositionally biased stretch (basic residues) spans 426–437 (QGKRRKKKRTAN).

This sequence belongs to the RNase PH family. As to quaternary structure, component of the RNA exosome core complex (Exo-9), composed of EXOSC1, EXOSC2, EXOSC3, EXOSC4, EXOSC5, EXOSC6, EXOSC7, EXOSC8 and EXOSC9; within the complex interacts with EXOSC3, EXOSC4, EXOSC5 and DIS3. The catalytically inactive RNA exosome core complex (Exo-9) associates with the catalytic subunit EXOSC10/RRP6. Exo-9 may associate with DIS3 to form the nucleolar exosome complex, or DIS3L to form the cytoplasmic exosome complex. Exo-9 is formed by a hexameric base ring consisting of the heterodimers EXOSC4-EXOSC9, EXOSC5-EXOSC8 and EXOSC6-EXOSC7, and a cap ring consisting of EXOSC1, EXOSC2 and EXOSC3. The RNA exosome complex associates with cofactors C1D/RRP47, MPHOSPH6/MPP6 and MTREX/MTR4. Interacts (via C-terminus region) with SETX (via N-terminus domain); the interaction enhances SETX sumoylation. Interacts with DIS3; the interaction is direct.

The protein localises to the cytoplasm. It is found in the nucleus. The protein resides in the nucleolus. Its subcellular location is the nucleoplasm. Non-catalytic component of the RNA exosome complex which has 3'-&gt;5' exoribonuclease activity and participates in a multitude of cellular RNA processing and degradation events. In the nucleus, the RNA exosome complex is involved in proper maturation of stable RNA species such as rRNA, snRNA and snoRNA, in the elimination of RNA processing by-products and non-coding 'pervasive' transcripts, such as antisense RNA species and promoter-upstream transcripts (PROMPTs), and of mRNAs with processing defects, thereby limiting or excluding their export to the cytoplasm. The RNA exosome may be involved in Ig class switch recombination (CSR) and/or Ig variable region somatic hypermutation (SHM) by targeting AICDA deamination activity to transcribed dsDNA substrates. In the cytoplasm, the RNA exosome complex is involved in general mRNA turnover and specifically degrades inherently unstable mRNAs containing AU-rich elements (AREs) within their 3' untranslated regions, and in RNA surveillance pathways, preventing translation of aberrant mRNAs. It seems to be involved in degradation of histone mRNA. The catalytic inactive RNA exosome core complex of 9 subunits (Exo-9) is proposed to play a pivotal role in the binding and presentation of RNA for ribonucleolysis, and to serve as a scaffold for the association with catalytic subunits and accessory proteins or complexes. EXOSC9 binds to ARE-containing RNAs. This chain is Exosome complex component RRP45 (Exosc9), found in Rattus norvegicus (Rat).